The primary structure comprises 122 residues: Large ribosomal subunit protein uL14 (122 aa).

Belongs to the universal ribosomal protein uL14 family. Part of the 50S ribosomal subunit. Forms a cluster with proteins L3 and L19. In the 70S ribosome, L14 and L19 interact and together make contacts with the 16S rRNA in bridges B5 and B8.

Binds to 23S rRNA. Forms part of two intersubunit bridges in the 70S ribosome. This chain is Large ribosomal subunit protein uL14, found in Corynebacterium kroppenstedtii (strain DSM 44385 / JCM 11950 / CIP 105744 / CCUG 35717).